The chain runs to 292 residues: ATP synthase gamma chain (292 aa).

This sequence belongs to the ATPase gamma chain family. As to quaternary structure, F-type ATPases have 2 components, CF(1) - the catalytic core - and CF(0) - the membrane proton channel. CF(1) has five subunits: alpha(3), beta(3), gamma(1), delta(1), epsilon(1). CF(0) has three main subunits: a, b and c.

The protein resides in the cell inner membrane. In terms of biological role, produces ATP from ADP in the presence of a proton gradient across the membrane. The gamma chain is believed to be important in regulating ATPase activity and the flow of protons through the CF(0) complex. The sequence is that of ATP synthase gamma chain from Rhodopseudomonas palustris (strain BisB18).